A 689-amino-acid chain; its full sequence is Protein SDA1 homolog (689 aa).

Disordered stretches follow at residues Asp-227–Lys-260, Glu-485–Trp-512, and Thr-623–Lys-689. A coiled-coil region spans residues Lys-258–Asp-319. A compositionally biased stretch (acidic residues) spans Pro-492–Trp-512. Over residues Arg-670–Leu-681 the composition is skewed to basic and acidic residues.

This sequence belongs to the SDA1 family.

It localises to the nucleus. The protein resides in the nucleolus. Its function is as follows. Required for 60S pre-ribosomal subunits export to the cytoplasm. This chain is Protein SDA1 homolog (sdad1), found in Xenopus laevis (African clawed frog).